A 494-amino-acid polypeptide reads, in one-letter code: Glucose-6-phosphate exchanger SLC37A2 (494 aa).

A helical transmembrane segment spans residues 20 to 37 (YRFSILFLTFVFYTSYHL). N52, N63, and N67 each carry an N-linked (GlcNAc...) asparagine glycan. Transmembrane regions (helical) follow at residues 85-105 (FGVLDNCFLVAYAVGMFFSGI), 116-136 (LSTGMLLSGLFTALFGLGFYW), 146-166 (LVQALNGLVQTTGWPAVVACV), 187-207 (SVGNILGSLIAGVYVSSAWGL), 208-228 (SFIVPGIIIASTGVICFLFLV), 295-315 (LCLLFAKLVSYTFLYWLPLYI), 327-347 (GDLSTLFDVGGILGGIVAGLV), 355-375 (ASTCCAMLIIAAPMLFLYNKI), 384-404 (VGMLLWCGALVNGPYALITTA), 427-447 (AIIDGTGSIGAAVGPLLAGLI), and 455-475 (VFYMLIAADVLACLLLSRLVY).

The protein belongs to the major facilitator superfamily. Organophosphate:Pi antiporter (OPA) (TC 2.A.1.4) family.

The protein localises to the endoplasmic reticulum membrane. The catalysed reaction is D-glucose 6-phosphate(in) + phosphate(out) = D-glucose 6-phosphate(out) + phosphate(in). Functionally, inorganic phosphate and glucose-6-phosphate antiporter. May transport cytoplasmic glucose-6-phosphate into the lumen of the endoplasmic reticulum and translocate inorganic phosphate into the opposite direction. The protein is Glucose-6-phosphate exchanger SLC37A2 of Danio rerio (Zebrafish).